The following is a 434-amino-acid chain: Elongation factor 1-alpha (434 aa).

The tr-type G domain maps to 5-232; the sequence is KPHINLVVIG…DNVHPPKRPV (228 aa). Residues 14 to 21 are G1; the sequence is GHVVAGKS. 14–21 provides a ligand contact to GTP; it reads GHVVAGKS. The tract at residues 70-74 is G2; it reads GITID. A G3 region spans residues 91–94; sequence DAPG. Residues 91 to 95 and 153 to 156 each bind GTP; these read DAPGH and NKMD. Residues 153 to 156 form a G4 region; the sequence is NKMD. A G5 region spans residues 196 to 198; that stretch reads SGF.

This sequence belongs to the TRAFAC class translation factor GTPase superfamily. Classic translation factor GTPase family. EF-Tu/EF-1A subfamily.

The protein localises to the cytoplasm. This protein promotes the GTP-dependent binding of aminoacyl-tRNA to the A-site of ribosomes during protein biosynthesis. This chain is Elongation factor 1-alpha, found in Blastocystis hominis.